Here is an 804-residue protein sequence, read N- to C-terminus: Zinc finger protein 541 (804 aa).

Disordered stretches follow at residues 21–120 (SKAS…NPDI) and 133–197 (TLDL…GNPR). The C2H2-type 1 zinc finger occupies 285 to 307 (FICKNCSQMFYTEKGLSSHMCFH). The segment at 379–426 (MEQEKDGEERDSKESSQQRKRKKRPPPKRLFIPPPPSTAGEPGPAGCH) is disordered. A compositionally biased stretch (basic and acidic residues) spans 380-395 (EQEKDGEERDSKESSQ). Residues 396 to 405 (QRKRKKRPPP) show a composition bias toward basic residues. Positions 509 to 601 (PHINIGSRFQ…VALETLLLRG (93 aa)) constitute an ELM2 domain. Positions 616–667 (TGSDVWTPIEKRLFKKAFYAHKKDFYLIHKTIQTKTVAQCVEYYYIWKKMIK) constitute an SANT domain. A disordered region spans residues 680–743 (VKREPEEVER…TPEPSGSVES (64 aa)). Positions 690 to 721 (TEEKVPCSPRERPSHHPIPELKIKTKSYRRES) are enriched in basic and acidic residues. The C2H2-type 2 zinc-finger motif lies at 747–769 (FPCRECERVFDKIKSRNAHMKRH).

As to quaternary structure, interacts with DNTTIP1. Identified in a complex with KCDT19, HDAC1 and HSPA2s. Component of a histone deacetylase complex containing DNTTIP1, ZNF541, HDAC1 and HDAC2. Identified in a complex with HDAC1, HDAC2, DNTTIP1 and KCTD19.

It is found in the nucleus. Its function is as follows. Transcription regulator which is essential for male fertility and for the completion of meiotic prophase in spermatocytes. Regulates progression of the pachytene stage of meiotic prophase by activating the expression of genes involved in meiosis and post-meiosis during spermatogenesis. Maintains the repression of pre-pachytene transcriptional programs, including meiotic double-strand breaks (DSB) formation genes in pachytene spermatocytes and suppresses aberrant DSB formation after mid-pachytene, thus ensuring meiosis progression. The chain is Zinc finger protein 541 (ZNF541) from Macaca fascicularis (Crab-eating macaque).